Consider the following 932-residue polypeptide: Protein translocase subunit SecA (932 aa).

ATP-binding positions include glutamine 87, 105–109 (GEGKT), and aspartate 515. Residues cysteine 916, cysteine 918, cysteine 927, and histidine 928 each coordinate Zn(2+).

Belongs to the SecA family. In terms of assembly, monomer and homodimer. Part of the essential Sec protein translocation apparatus which comprises SecA, SecYEG and auxiliary proteins SecDF-YajC and YidC. Zn(2+) serves as cofactor.

The protein resides in the cell inner membrane. It localises to the cytoplasm. The catalysed reaction is ATP + H2O + cellular proteinSide 1 = ADP + phosphate + cellular proteinSide 2.. Its function is as follows. Part of the Sec protein translocase complex. Interacts with the SecYEG preprotein conducting channel. Has a central role in coupling the hydrolysis of ATP to the transfer of proteins into and across the cell membrane, serving both as a receptor for the preprotein-SecB complex and as an ATP-driven molecular motor driving the stepwise translocation of polypeptide chains across the membrane. The chain is Protein translocase subunit SecA from Burkholderia lata (strain ATCC 17760 / DSM 23089 / LMG 22485 / NCIMB 9086 / R18194 / 383).